A 273-amino-acid chain; its full sequence is Imidazole glycerol phosphate synthase subunit HisF (273 aa).

Active-site residues include Asp12 and Asp136.

The protein belongs to the HisA/HisF family. Heterodimer of HisH and HisF.

The protein localises to the cytoplasm. It catalyses the reaction 5-[(5-phospho-1-deoxy-D-ribulos-1-ylimino)methylamino]-1-(5-phospho-beta-D-ribosyl)imidazole-4-carboxamide + L-glutamine = D-erythro-1-(imidazol-4-yl)glycerol 3-phosphate + 5-amino-1-(5-phospho-beta-D-ribosyl)imidazole-4-carboxamide + L-glutamate + H(+). Its pathway is amino-acid biosynthesis; L-histidine biosynthesis; L-histidine from 5-phospho-alpha-D-ribose 1-diphosphate: step 5/9. IGPS catalyzes the conversion of PRFAR and glutamine to IGP, AICAR and glutamate. The HisF subunit catalyzes the cyclization activity that produces IGP and AICAR from PRFAR using the ammonia provided by the HisH subunit. The protein is Imidazole glycerol phosphate synthase subunit HisF of Halobacterium salinarum (strain ATCC 29341 / DSM 671 / R1).